The chain runs to 626 residues: DNA mismatch repair protein MutL (626 aa).

Disordered stretches follow at residues 385–413 and 418–437; these read SGAS…PSMV and LTPS…VAPD.

Belongs to the DNA mismatch repair MutL/HexB family.

Functionally, this protein is involved in the repair of mismatches in DNA. It is required for dam-dependent methyl-directed DNA mismatch repair. May act as a 'molecular matchmaker', a protein that promotes the formation of a stable complex between two or more DNA-binding proteins in an ATP-dependent manner without itself being part of a final effector complex. The polypeptide is DNA mismatch repair protein MutL (Chlorobaculum parvum (strain DSM 263 / NCIMB 8327) (Chlorobium vibrioforme subsp. thiosulfatophilum)).